A 1605-amino-acid chain; its full sequence is Pentafunctional AROM polypeptide (1605 aa).

A 3-dehydroquinate synthase region spans residues 1 to 384 (MTGPTKISIL…YEPRASVVPN (384 aa)). NAD(+)-binding positions include 44–46 (DTN), 81–84 (EVSK), 114–116 (GGV), and Asp119. Residue Arg130 participates in 7-phospho-2-dehydro-3-deoxy-D-arabino-heptonate binding. 139–140 (TT) provides a ligand contact to NAD(+). 2 residues coordinate 7-phospho-2-dehydro-3-deoxy-D-arabino-heptonate: Asp146 and Lys152. Residue Lys161 participates in NAD(+) binding. Asn162 contributes to the 7-phospho-2-dehydro-3-deoxy-D-arabino-heptonate binding site. NAD(+) contacts are provided by residues 179–182 (FLET) and Asn190. Glu194 is a binding site for Zn(2+). 7-phospho-2-dehydro-3-deoxy-D-arabino-heptonate is bound by residues 194–197 (EVIK) and Lys250. The active-site Proton acceptor; for 3-dehydroquinate synthase activity is the Glu260. 7-phospho-2-dehydro-3-deoxy-D-arabino-heptonate contacts are provided by residues 264–268 (RNLLN) and His271. His271 provides a ligand contact to Zn(2+). His275 functions as the Proton acceptor; for 3-dehydroquinate synthase activity in the catalytic mechanism. 7-phospho-2-dehydro-3-deoxy-D-arabino-heptonate-binding residues include His287 and Lys356. His287 is a binding site for Zn(2+). Positions 397 to 842 (VHPGVSTTSE…WDTLRQKFAV (446 aa)) are EPSP synthase. The active-site For EPSP synthase activity is Cys824. Positions 864-1055 (SASVFIIGMR…KKKQHSFFVS (192 aa)) are shikimate kinase. 871–878 (GMRGAGKT) serves as a coordination point for ATP. Positions 1056-1276 (LTLPDVRGAD…AAPGQLSATD (221 aa)) are 3-dehydroquinase. Residue His1179 is the Proton acceptor; for 3-dehydroquinate dehydratase activity of the active site. The active-site Schiff-base intermediate with substrate; for 3-dehydroquinate dehydratase activity is the Lys1207. A shikimate dehydrogenase region spans residues 1289 to 1605 (KKRFALFGSP…LSGRTMLTCS (317 aa)).

The protein in the N-terminal section; belongs to the sugar phosphate cyclases superfamily. Dehydroquinate synthase family. It in the 2nd section; belongs to the EPSP synthase family. In the 3rd section; belongs to the shikimate kinase family. This sequence in the 4th section; belongs to the type-I 3-dehydroquinase family. The protein in the C-terminal section; belongs to the shikimate dehydrogenase family. Homodimer. The cofactor is Zn(2+).

The protein localises to the cytoplasm. The catalysed reaction is 7-phospho-2-dehydro-3-deoxy-D-arabino-heptonate = 3-dehydroquinate + phosphate. It catalyses the reaction 3-dehydroquinate = 3-dehydroshikimate + H2O. It carries out the reaction shikimate + NADP(+) = 3-dehydroshikimate + NADPH + H(+). The enzyme catalyses shikimate + ATP = 3-phosphoshikimate + ADP + H(+). The catalysed reaction is 3-phosphoshikimate + phosphoenolpyruvate = 5-O-(1-carboxyvinyl)-3-phosphoshikimate + phosphate. The protein operates within metabolic intermediate biosynthesis; chorismate biosynthesis; chorismate from D-erythrose 4-phosphate and phosphoenolpyruvate: step 2/7. It participates in metabolic intermediate biosynthesis; chorismate biosynthesis; chorismate from D-erythrose 4-phosphate and phosphoenolpyruvate: step 3/7. It functions in the pathway metabolic intermediate biosynthesis; chorismate biosynthesis; chorismate from D-erythrose 4-phosphate and phosphoenolpyruvate: step 4/7. Its pathway is metabolic intermediate biosynthesis; chorismate biosynthesis; chorismate from D-erythrose 4-phosphate and phosphoenolpyruvate: step 5/7. The protein operates within metabolic intermediate biosynthesis; chorismate biosynthesis; chorismate from D-erythrose 4-phosphate and phosphoenolpyruvate: step 6/7. Functionally, the AROM polypeptide catalyzes 5 consecutive enzymatic reactions in prechorismate polyaromatic amino acid biosynthesis. In Aspergillus fumigatus (strain CBS 144.89 / FGSC A1163 / CEA10) (Neosartorya fumigata), this protein is Pentafunctional AROM polypeptide.